The chain runs to 497 residues: L-arabinose isomerase (497 aa).

Residues E306, E333, H349, and H448 each coordinate Mn(2+).

The protein belongs to the arabinose isomerase family. Mn(2+) serves as cofactor.

It carries out the reaction beta-L-arabinopyranose = L-ribulose. The protein operates within carbohydrate degradation; L-arabinose degradation via L-ribulose; D-xylulose 5-phosphate from L-arabinose (bacterial route): step 1/3. Catalyzes the conversion of L-arabinose to L-ribulose. This chain is L-arabinose isomerase, found in Vibrio parahaemolyticus serotype O3:K6 (strain RIMD 2210633).